The primary structure comprises 177 residues: DELTA-stichotoxin-Hmg2b (177 aa).

Residues 3-12 (ALAGTIIAGA) are plays an important role in the hemolytic activity. The interval 11-30 (GASLGFQILDKVLGELGKVS) is N-terminal region. 7 residues coordinate phosphocholine: serine 54, valine 87, serine 105, proline 107, tyrosine 133, tyrosine 137, and tyrosine 138.

It belongs to the actinoporin family. Sea anemone subfamily. In terms of assembly, octamer or nonamer in membranes. Monomer in the soluble state.

It localises to the secreted. The protein resides in the nematocyst. It is found in the target cell membrane. Pore-forming protein that forms cations-selective hydrophilic pores of around 1 nm and causes cytolysis. Pore formation is a multi-step process that involves specific recognition of membrane sphingomyelin (but neither cholesterol nor phosphatidylcholine) using aromatic rich region and adjacent phosphocholine (POC) binding site, firm binding to the membrane (mainly driven by hydrophobic interactions) accompanied by the transfer of the N-terminal region to the lipid-water interface and finally pore formation after oligomerization of monomers This toxin shows hemolytic activity. In Heteractis magnifica (Magnificent sea anemone), this protein is DELTA-stichotoxin-Hmg2b.